The primary structure comprises 340 residues: Anthranilate phosphoribosyltransferase (340 aa).

Residues glycine 82, 85-86 (GD), threonine 90, 92-95 (NIST), 110-118 (KHGSRSVSS), and serine 122 each bind 5-phospho-alpha-D-ribose 1-diphosphate. Anthranilate is bound at residue glycine 82. Position 94 (serine 94) interacts with Mg(2+). Arginine 168 is an anthranilate binding site. Residues aspartate 227 and glutamate 228 each coordinate Mg(2+).

It belongs to the anthranilate phosphoribosyltransferase family. As to quaternary structure, homodimer. Mg(2+) serves as cofactor.

It carries out the reaction N-(5-phospho-beta-D-ribosyl)anthranilate + diphosphate = 5-phospho-alpha-D-ribose 1-diphosphate + anthranilate. Its pathway is amino-acid biosynthesis; L-tryptophan biosynthesis; L-tryptophan from chorismate: step 2/5. Functionally, catalyzes the transfer of the phosphoribosyl group of 5-phosphorylribose-1-pyrophosphate (PRPP) to anthranilate to yield N-(5'-phosphoribosyl)-anthranilate (PRA). The chain is Anthranilate phosphoribosyltransferase from Hydrogenovibrio crunogenus (strain DSM 25203 / XCL-2) (Thiomicrospira crunogena).